Consider the following 267-residue polypeptide: Diphthine synthase (267 aa).

S-adenosyl-L-methionine-binding positions include Leu9, Asp85, Val88, 113–114 (SI), Leu170, Ala211, and His236.

It belongs to the diphthine synthase family. As to quaternary structure, homodimer.

The enzyme catalyses 2-[(3S)-amino-3-carboxypropyl]-L-histidyl-[translation elongation factor 2] + 3 S-adenosyl-L-methionine = diphthine-[translation elongation factor 2] + 3 S-adenosyl-L-homocysteine + 3 H(+). It participates in protein modification; peptidyl-diphthamide biosynthesis. Functionally, S-adenosyl-L-methionine-dependent methyltransferase that catalyzes the trimethylation of the amino group of the modified target histidine residue in translation elongation factor 2 (EF-2), to form an intermediate called diphthine. The three successive methylation reactions represent the second step of diphthamide biosynthesis. This is Diphthine synthase from Methanococcoides burtonii (strain DSM 6242 / NBRC 107633 / OCM 468 / ACE-M).